The sequence spans 631 residues: Probable potassium transport system protein Kup (631 aa).

The next 12 membrane-spanning stretches (helical) occupy residues 17-37, 56-76, 109-129, 147-167, 174-194, 215-235, 256-276, 288-308, 346-366, 378-398, 403-423, and 428-448; these read IGLL…SPLY, ILGV…FKYM, MMMV…SMIT, GLDH…FLIQ, IGVL…ALGV, FFII…LALT, WFIL…ALVL, LLAP…ATII, IYIG…VIGF, VAVT…MLML, PLLA…FFAA, and IFQG…LMTT.

This sequence belongs to the HAK/KUP transporter (TC 2.A.72) family.

It is found in the cell inner membrane. The catalysed reaction is K(+)(in) + H(+)(in) = K(+)(out) + H(+)(out). Its function is as follows. Transport of potassium into the cell. Likely operates as a K(+):H(+) symporter. This Pseudomonas syringae pv. tomato (strain ATCC BAA-871 / DC3000) protein is Probable potassium transport system protein Kup.